The sequence spans 310 residues: tRNA-cytidine(32) 2-sulfurtransferase (310 aa).

Positions 48–53 match the PP-loop motif motif; it reads SGGKDS. 3 residues coordinate [4Fe-4S] cluster: C123, C126, and C214.

Belongs to the TtcA family. As to quaternary structure, homodimer. It depends on Mg(2+) as a cofactor. [4Fe-4S] cluster serves as cofactor.

The protein localises to the cytoplasm. The enzyme catalyses cytidine(32) in tRNA + S-sulfanyl-L-cysteinyl-[cysteine desulfurase] + AH2 + ATP = 2-thiocytidine(32) in tRNA + L-cysteinyl-[cysteine desulfurase] + A + AMP + diphosphate + H(+). The protein operates within tRNA modification. In terms of biological role, catalyzes the ATP-dependent 2-thiolation of cytidine in position 32 of tRNA, to form 2-thiocytidine (s(2)C32). The sulfur atoms are provided by the cysteine/cysteine desulfurase (IscS) system. The chain is tRNA-cytidine(32) 2-sulfurtransferase from Vibrio cholerae serotype O1 (strain ATCC 39315 / El Tor Inaba N16961).